Consider the following 186-residue polypeptide: uncharacterized protein (186 aa).

This is an uncharacterized protein from Methanocaldococcus jannaschii (strain ATCC 43067 / DSM 2661 / JAL-1 / JCM 10045 / NBRC 100440) (Methanococcus jannaschii).